A 361-amino-acid polypeptide reads, in one-letter code: Protein SGT1 homolog (361 aa).

TPR repeat units follow at residues 3-36 (ASDL…GPAT), 37-70 (ADLY…DPTM), and 71-104 (HKAY…APGD). Thr150 is modified (phosphothreonine). A CS domain is found at 159–248 (KPKYRHDYYN…AEQVTWTTLD (90 aa)). Residues 255 to 295 (AIPQKISTPAETAPRPSYPSSKSKKDWDKLEAEVKKEEKEE) are disordered. Thr262 is subject to Phosphothreonine. The SGS domain occupies 271 to 361 (SYPSSKSKKD…DGMELKKWEI (91 aa)). Basic and acidic residues predominate over residues 277–295 (SKKDWDKLEAEVKKEEKEE).

This sequence belongs to the SGT1 family. Post-translationally, constitutively phosphorylated at Thr-262 and phosphorylated at Thr-150 upon infection with the fungal pathogen Ustilago maydis.

Its subcellular location is the cytoplasm. It localises to the nucleus. Functionally, may act as positive regulator of basal defense. May be involved in basal disease resistance to the fungal pathogen Ustilago maydis. The sequence is that of Protein SGT1 homolog from Zea mays (Maize).